A 244-amino-acid chain; its full sequence is ATP synthase subunit a (244 aa).

Helical transmembrane passes span 17–37 (LSNV…AVLT), 74–94 (PFLA…MLGL), 112–132 (DPAI…YYGV), 148–168 (IPLL…TLGL), 171–191 (YGNI…ATNF), 196–216 (IALG…WQAF), and 217–237 (SLFV…VYIS).

This sequence belongs to the ATPase A chain family. In terms of assembly, F-type ATPases have 2 components, CF(1) - the catalytic core - and CF(0) - the membrane proton channel. CF(1) has five subunits: alpha(3), beta(3), gamma(1), delta(1), epsilon(1). CF(0) has three main subunits: a(1), b(2) and c(9-12). The alpha and beta chains form an alternating ring which encloses part of the gamma chain. CF(1) is attached to CF(0) by a central stalk formed by the gamma and epsilon chains, while a peripheral stalk is formed by the delta and b chains.

It localises to the cell membrane. Its function is as follows. Key component of the proton channel; it plays a direct role in the translocation of protons across the membrane. This Bacillus pumilus (strain SAFR-032) protein is ATP synthase subunit a.